The sequence spans 91 residues: Small ribosomal subunit protein bS20 (91 aa).

Residues 1–18 show a composition bias toward basic and acidic residues; sequence MPLHKSAEKRLRQSERRN. A disordered region spans residues 1-26; the sequence is MPLHKSAEKRLRQSERRNARNRSRKK.

It belongs to the bacterial ribosomal protein bS20 family.

Its function is as follows. Binds directly to 16S ribosomal RNA. This Pelodictyon phaeoclathratiforme (strain DSM 5477 / BU-1) protein is Small ribosomal subunit protein bS20.